The sequence spans 238 residues: Large ribosomal subunit protein uL1 (238 aa).

The protein belongs to the universal ribosomal protein uL1 family. Part of the 50S ribosomal subunit.

Binds directly to 23S rRNA. The L1 stalk is quite mobile in the ribosome, and is involved in E site tRNA release. Functionally, protein L1 is also a translational repressor protein, it controls the translation of the L11 operon by binding to its mRNA. This chain is Large ribosomal subunit protein uL1, found in Saccharopolyspora erythraea (strain ATCC 11635 / DSM 40517 / JCM 4748 / NBRC 13426 / NCIMB 8594 / NRRL 2338).